A 266-amino-acid chain; its full sequence is Pre-mRNA-splicing factor PRP11 (266 aa).

Residues 1–21 (MNYLEGVGSKKGGGGIASESQ) form a disordered region. A Matrin-type zinc finger spans residues 66-96 (LVCKLCNTMHMSWSSVERHLGGKKHGLNVLR).

Belongs to the SF3A2 family. Belongs to the CWC complex (or CEF1-associated complex), a spliceosome sub-complex reminiscent of a late-stage spliceosome composed of the U2, U5 and U6 snRNAs and at least BUD13, BUD31, BRR2, CDC40, CEF1, CLF1, CUS1, CWC2, CWC15, CWC21, CWC22, CWC23, CWC24, CWC25, CWC27, ECM2, HSH155, IST3, ISY1, LEA1, MSL1, NTC20, PRP8, PRP9, PRP11, PRP19, PRP21, PRP22, PRP45, PRP46, SLU7, SMB1, SMD1, SMD2, SMD3, SMX2, SMX3, SNT309, SNU114, SPP2, SYF1, SYF2, RSE1 and YJU2. Interacts with CUS2.

The protein resides in the nucleus. Functionally, mRNA splicing factors, PRP9, PRP11, and PRP21, are necessary for addition of the U2 snRNP to the pre-mRNA in an early step of spliceosome assembly. This is Pre-mRNA-splicing factor PRP11 (PRP11) from Saccharomyces cerevisiae (strain ATCC 204508 / S288c) (Baker's yeast).